A 326-amino-acid chain; its full sequence is Nitrogen metabolite regulation-like protein bik4 (326 aa).

NADP(+)-binding positions include 13–18 (GATGEV) and 161–164 (FASN).

It belongs to the NmrA-type oxidoreductase family.

In terms of biological role, nitrogen metabolite regulation-like protein involved in the regulation of the gene cluster that mediates the biosynthesis of bikaverin, a red pigment also considered as a mycotoxin. This Gibberella fujikuroi (strain CBS 195.34 / IMI 58289 / NRRL A-6831) (Bakanae and foot rot disease fungus) protein is Nitrogen metabolite regulation-like protein bik4.